The chain runs to 439 residues: Histidine--tRNA ligase (439 aa).

It belongs to the class-II aminoacyl-tRNA synthetase family. As to quaternary structure, homodimer.

It localises to the cytoplasm. The enzyme catalyses tRNA(His) + L-histidine + ATP = L-histidyl-tRNA(His) + AMP + diphosphate + H(+). This chain is Histidine--tRNA ligase, found in Leptospira interrogans serogroup Icterohaemorrhagiae serovar copenhageni (strain Fiocruz L1-130).